A 393-amino-acid chain; its full sequence is Formate-dependent phosphoribosylglycinamide formyltransferase (393 aa).

Residues 22–23 and Glu-82 each bind N(1)-(5-phospho-beta-D-ribosyl)glycinamide; that span reads EL. ATP-binding positions include Arg-114, Lys-155, 160-165, 195-198, and Glu-203; these read SSGKGQ and EGFV. Residues 119 to 308 enclose the ATP-grasp domain; the sequence is RLAAEELGLP…EFALHARAIL (190 aa). Residues Glu-267 and Glu-279 each coordinate Mg(2+). Residues Asp-286, Lys-356, and 363–364 each bind N(1)-(5-phospho-beta-D-ribosyl)glycinamide; that span reads RR.

The protein belongs to the PurK/PurT family. In terms of assembly, homodimer.

It carries out the reaction N(1)-(5-phospho-beta-D-ribosyl)glycinamide + formate + ATP = N(2)-formyl-N(1)-(5-phospho-beta-D-ribosyl)glycinamide + ADP + phosphate + H(+). The protein operates within purine metabolism; IMP biosynthesis via de novo pathway; N(2)-formyl-N(1)-(5-phospho-D-ribosyl)glycinamide from N(1)-(5-phospho-D-ribosyl)glycinamide (formate route): step 1/1. Involved in the de novo purine biosynthesis. Catalyzes the transfer of formate to 5-phospho-ribosyl-glycinamide (GAR), producing 5-phospho-ribosyl-N-formylglycinamide (FGAR). Formate is provided by PurU via hydrolysis of 10-formyl-tetrahydrofolate. This Nitratidesulfovibrio vulgaris (strain DSM 19637 / Miyazaki F) (Desulfovibrio vulgaris) protein is Formate-dependent phosphoribosylglycinamide formyltransferase.